We begin with the raw amino-acid sequence, 368 residues long: Flagellar P-ring protein (368 aa).

Positions Met-1–Ala-24 are cleaved as a signal peptide.

The protein belongs to the FlgI family. In terms of assembly, the basal body constitutes a major portion of the flagellar organelle and consists of four rings (L,P,S, and M) mounted on a central rod.

It is found in the periplasm. It localises to the bacterial flagellum basal body. Assembles around the rod to form the L-ring and probably protects the motor/basal body from shearing forces during rotation. In Geobacter sulfurreducens (strain ATCC 51573 / DSM 12127 / PCA), this protein is Flagellar P-ring protein.